The following is a 244-amino-acid chain: Extracellular superoxide dismutase [Cu-Zn] (244 aa).

A signal peptide spans 1–15 (MVAFLFCNLLLVACG). Intrachain disulfides connect cysteine 70–cysteine 215 and cysteine 132–cysteine 214. An N-linked (GlcNAc...) asparagine glycan is attached at asparagine 114. Cu cation contacts are provided by histidine 121, histidine 123, and histidine 138. Residues histidine 138, histidine 146, histidine 149, and aspartate 152 each coordinate Zn(2+). Histidine 188 contacts Cu cation. A disordered region spans residues 224–244 (AWESQTKERKKRRRESECKTT).

It belongs to the Cu-Zn superoxide dismutase family. In terms of assembly, homodimer. Interacts with ATP7A; this interaction is copper-dependent and is required for SOD3 activity. Cu cation is required as a cofactor. It depends on Zn(2+) as a cofactor.

The protein resides in the secreted. It localises to the extracellular space. The protein localises to the golgi apparatus. Its subcellular location is the trans-Golgi network. The catalysed reaction is 2 superoxide + 2 H(+) = H2O2 + O2. Functionally, protect the extracellular space from toxic effect of reactive oxygen intermediates by converting superoxide radicals into hydrogen peroxide and oxygen. This chain is Extracellular superoxide dismutase [Cu-Zn] (Sod3), found in Rattus norvegicus (Rat).